The following is a 318-amino-acid chain: Mechanosensory protein 3 (318 aa).

2 consecutive LIM zinc-binding domains span residues 27–86 (NKCY…DYSA) and 87–152 (HRCA…PMDD). Positions 214 to 273 (RRGPRTTIRQNQLDVLNEMFSNTPKPSKHARAKLALETGLSMRVIQVWFQNRRSKERRLK) form a DNA-binding region, homeobox.

It localises to the nucleus. Specifies differentiation of the set of six touch receptor neurons. Binds cooperatively as a heterodimer with unc-86 to sites in the mec-3 gene promoter. This Caenorhabditis briggsae protein is Mechanosensory protein 3 (mec-3).